A 359-amino-acid chain; its full sequence is UPF0283 membrane protein RL2646 (359 aa).

Residues 1 to 48 form a disordered region; the sequence is MSKPPSDPPRRAPAAFIYEDEATERRDNGRQGGERRKPESFSEHIVVT. The segment covering 23–42 has biased composition (basic and acidic residues); that stretch reads TERRDNGRQGGERRKPESFS. Helical transmembrane passes span 77 to 97 and 111 to 131; these read FGKIAAGAFGILLSLAIGLWT and LGYAALAVLAVGILAVLALVI.

It belongs to the UPF0283 family.

Its subcellular location is the cell inner membrane. The chain is UPF0283 membrane protein RL2646 from Rhizobium johnstonii (strain DSM 114642 / LMG 32736 / 3841) (Rhizobium leguminosarum bv. viciae).